A 339-amino-acid chain; its full sequence is Undecaprenyl-phosphate 4-deoxy-4-formamido-L-arabinose transferase (339 aa).

A run of 2 helical transmembrane segments spans residues 235–255 (LSLVGGGMALAGFLFALFLLV) and 269–289 (LFVLFAVLFMFSGVQLLGMGL).

The protein belongs to the glycosyltransferase 2 family.

The protein localises to the cell inner membrane. The enzyme catalyses UDP-4-deoxy-4-formamido-beta-L-arabinose + di-trans,octa-cis-undecaprenyl phosphate = 4-deoxy-4-formamido-alpha-L-arabinopyranosyl di-trans,octa-cis-undecaprenyl phosphate + UDP. The protein operates within glycolipid biosynthesis; 4-amino-4-deoxy-alpha-L-arabinose undecaprenyl phosphate biosynthesis; 4-amino-4-deoxy-alpha-L-arabinose undecaprenyl phosphate from UDP-4-deoxy-4-formamido-beta-L-arabinose and undecaprenyl phosphate: step 1/2. Its pathway is bacterial outer membrane biogenesis; lipopolysaccharide biosynthesis. In terms of biological role, catalyzes the transfer of 4-deoxy-4-formamido-L-arabinose from UDP to undecaprenyl phosphate. The modified arabinose is attached to lipid A and is required for resistance to polymyxin and cationic antimicrobial peptides. The chain is Undecaprenyl-phosphate 4-deoxy-4-formamido-L-arabinose transferase from Pseudomonas paraeruginosa (strain DSM 24068 / PA7) (Pseudomonas aeruginosa (strain PA7)).